Reading from the N-terminus, the 332-residue chain is Phospho-N-acetylmuramoyl-pentapeptide-transferase (332 aa).

Helical transmembrane passes span 9–29 (IYTI…IIPF), 55–75 (TIGG…AGLI), 79–99 (LWVA…DDFI), 115–135 (MSLQ…ISVM), 155–175 (IPQY…VVVA), 196–216 (IVAA…LAIF), 253–273 (AVAI…IYFA), and 312–332 (VVIV…LGLN).

It belongs to the glycosyltransferase 4 family. MraY subfamily. Mg(2+) is required as a cofactor.

It localises to the cell membrane. It catalyses the reaction UDP-N-acetyl-alpha-D-muramoyl-L-alanyl-gamma-D-glutamyl-meso-2,6-diaminopimeloyl-D-alanyl-D-alanine + di-trans,octa-cis-undecaprenyl phosphate = di-trans,octa-cis-undecaprenyl diphospho-N-acetyl-alpha-D-muramoyl-L-alanyl-D-glutamyl-meso-2,6-diaminopimeloyl-D-alanyl-D-alanine + UMP. Its pathway is cell wall biogenesis; peptidoglycan biosynthesis. Catalyzes the initial step of the lipid cycle reactions in the biosynthesis of the cell wall peptidoglycan: transfers peptidoglycan precursor phospho-MurNAc-pentapeptide from UDP-MurNAc-pentapeptide onto the lipid carrier undecaprenyl phosphate, yielding undecaprenyl-pyrophosphoryl-MurNAc-pentapeptide, known as lipid I. In Alkaliphilus oremlandii (strain OhILAs) (Clostridium oremlandii (strain OhILAs)), this protein is Phospho-N-acetylmuramoyl-pentapeptide-transferase.